The primary structure comprises 390 residues: Elongation factor Ts 2, mitochondrial (390 aa).

The transit peptide at 1-24 (MMIFSTAVLRLCATSRIGAVTKRA) directs the protein to the mitochondrion. The segment covering 30–40 (SSASSSSSSSS) has biased composition (low complexity). Residues 30 to 54 (SSASSSSSSSSPTQSMPPQRYTHHQ) form a disordered region.

The protein belongs to the EF-Ts family.

Its subcellular location is the mitochondrion. Associates with the EF-Tu.GDP complex and induces the exchange of GDP to GTP. It remains bound to the aminoacyl-tRNA.EF-Tu.GTP complex up to the GTP hydrolysis stage on the ribosome. This Thalassiosira pseudonana (Marine diatom) protein is Elongation factor Ts 2, mitochondrial.